Here is a 282-residue protein sequence, read N- to C-terminus: Secretory carrier-associated membrane protein 1 (282 aa).

Residues 1–49 (MSRYQSHSFDDGEINPFANPTSVPAATSKLSPLPPEPYDRGATMDIPLD) form a disordered region. Over 1–117 (MSRYQSHSFD…EIPIHLQRIQ (117 aa)) the chain is Cytoplasmic. The segment covering 18-30 (ANPTSVPAATSKL) has biased composition (polar residues). Serine 31 carries the phosphoserine modification. Residues 48 to 93 (LDSGKDLKAKEKELREKEAELKRREQEIKRKEDAIAQAGIVIEEKN) are a coiled coil. The next 4 helical transmembrane spans lie at 118–138 (YVAF…IVAV), 150–170 (IWFL…VMWY), 185–205 (FGWF…AAVA), and 233–253 (IFYF…IWVI). Topologically, residues 254–282 (QQVYMYFRGSGKAAEMKQEATRRAMMAAL) are cytoplasmic.

Belongs to the SCAMP family.

The protein resides in the cell membrane. Its subcellular location is the cytoplasmic vesicle. It localises to the secretory vesicle membrane. Probably involved in membrane trafficking. The chain is Secretory carrier-associated membrane protein 1 (SCAMP1) from Arabidopsis thaliana (Mouse-ear cress).